Here is a 1233-residue protein sequence, read N- to C-terminus: Glutamate receptor ionotropic, NMDA 2C (1233 aa).

The signal sequence occupies residues 1 to 19; the sequence is MGGALGPALLLTSLFGAWA. The Extracellular portion of the chain corresponds to 20-554; sequence GLGPGQGEQG…SAFLEPYSPA (535 aa). N-linked (GlcNAc...) asparagine glycans are attached at residues Asn-70 and Asn-73. An intrachain disulfide couples Cys-82 to Cys-317. Residues Asn-337 and Asn-438 are each glycosylated (N-linked (GlcNAc...) asparagine). 2 cysteine pairs are disulfide-bonded: Cys-426-Cys-453 and Cys-433-Cys-454. Residues Ser-509, Thr-511, and Arg-516 each contribute to the L-glutamate site. N-linked (GlcNAc...) asparagine glycosylation occurs at Asn-539. Residues 555–575 form a helical membrane-spanning segment; that stretch reads VWVMMFVMCLTVVAITVFMFE. The Cytoplasmic segment spans residues 576–598; the sequence is YFSPVSYNQNLTRGKKSGGPAFT. Residues 599 to 611 constitute an intramembrane region (discontinuously helical); sequence IGKSVWLLWALVF. The interval 601–620 is pore-forming; the sequence is KSVWLLWALVFNNSVPIENP. At 612–626 the chain is on the cytoplasmic side; sequence NNSVPIENPRGTTSK. The helical transmembrane segment at 627–644 threads the bilayer; the sequence is IMVLVWAFFAVIFLASYT. The Extracellular portion of the chain corresponds to 645-813; it reads ANLAAFMIQE…EVMSSKLDID (169 aa). Asn-685 carries an N-linked (GlcNAc...) asparagine glycan. Residues Ser-687, Thr-688, and Asp-729 each coordinate L-glutamate. A disulfide bridge links Cys-743 with Cys-798. A helical transmembrane segment spans residues 814–836; sequence NMAGVFYMLLVAMGLALLVFAWE. Residues 837–1233 are Cytoplasmic-facing; that stretch reads HLVYWKLRHS…RRISSLESEV (397 aa). 3 positions are modified to phosphoserine: Ser-875, Ser-881, and Ser-912. A disordered region spans residues 920–994; sequence IENWGGGRRA…GPPLSDVSRV (75 aa). 2 stretches are compositionally biased toward pro residues: residues 929–956 and 975–987; these read APPPSPCPTPRSGPSPCLPTPDPPPEPS and PQPPGRPPTPGPP. Residues 1231–1233 carry the PDZ-binding motif; the sequence is SEV.

This sequence belongs to the glutamate-gated ion channel (TC 1.A.10.1) family. NR2C/GRIN2C subfamily. Heterotetramer. Forms heterotetrameric channels composed of two GluN1/zeta subunits (GRIN1), and two identical GluN2/epsilon subunits (GRIN2A, GRIN2B, GRIN2C or GRIN2D) or GluN3 subunits (GRIN3A or GRIN3B) (in vitro). In vivo, the subunit composition may depend on the expression levels of the different subunits. Interacts with PDZ domains of PATJ and DLG4. Interacts (via PDZ-binding motif) with SNX27 (via PDZ domain); the interaction is required for recycling to the plasma membrane when endocytosed and prevent degradation in lysosomes. Mainly expressed in brain with predominant expression is in the cerebellum, also present in the hippocampus, amygdala, caudate nucleus, corpus callosum, subthalamic nuclei and thalamus. Detected in the heart, skeletal muscle and pancreas.

The protein resides in the cell membrane. It is found in the postsynaptic cell membrane. It catalyses the reaction Ca(2+)(in) = Ca(2+)(out). It carries out the reaction Na(+)(in) = Na(+)(out). The enzyme catalyses K(+)(in) = K(+)(out). Its function is as follows. Component of N-methyl-D-aspartate (NMDA) receptors (NMDARs) that function as heterotetrameric, ligand-gated cation channels with high calcium permeability and voltage-dependent block by Mg(2+). Participates in synaptic plasticity for learning and memory formation by contributing to the slow phase of excitatory postsynaptic current and long-term synaptic potentiation. Channel activation requires binding of the neurotransmitter L-glutamate to the GluN2 subunit, glycine or D-serine binding to the GluN1 subunit, plus membrane depolarization to eliminate channel inhibition by Mg(2+). NMDARs mediate simultaneously the potasium efflux and the influx of calcium and sodium. Each GluN2 subunit confers differential attributes to channel properties, including activation, deactivation and desensitization kinetics, pH sensitivity, Ca2(+) permeability, and binding to allosteric modulators. This is Glutamate receptor ionotropic, NMDA 2C from Homo sapiens (Human).